We begin with the raw amino-acid sequence, 264 residues long: Short chain dehydrogenase/reductase dmxR18 (264 aa).

Positions 24, 70, 97, and 130 each coordinate NADP(+). Active-site proton donor residues include S146 and S147. Residues Y161, K165, and T196 each coordinate NADP(+). Y161 (proton acceptor) is an active-site residue. K165 (lowers pKa of active site Tyr) is an active-site residue.

Belongs to the short-chain dehydrogenases/reductases (SDR) family.

It carries out the reaction 3,8,9,10-tetrahydroxy-6-methyl-1,4-dihydroanthracen-1-one + NADPH + H(+) = (3R)-3,8,9,10-tetrahydroxy-6-methyl-1,2,3,4-tetrahydroanthracen-1-one + NADP(+). It functions in the pathway secondary metabolite biosynthesis. Functionally, short chain dehydrogenase/reductase; part of the gene cluster that mediates the biosynthesis of the dimeric xanthones cryptosporioptides. The pathway begins with the synthesis of atrochrysone thioester by the polyketide synthase dmx-nrPKS. The atrochrysone carboxyl ACP thioesterase dmxR1 then breaks the thioester bond and releases the atrochrysone carboxylic acid from dmx-nrPKS. Atrochrysone carboxylic acid is decarboxylated by the decarboxylase dmxR15, and oxidized by the anthrone oxygenase dmxR16 to yield emodin. Emodin is then reduced to emodin hydroquinone by the oxidoreductase dmxR7. A-ring reduction by the short chain dehydrogenase dmxR18, dehydration by the scytalone dehydratase-like protein dmxR17 and probable spontaneous re-oxidation, results in overall deoxygenation to chrysophanol. Baeyer-Villiger oxidation by the Baeyer-Villiger monooxygenase (BVMO) dmxR6 then yields monodictylactone in equilibrium with monodictyphenone. In the case of the cryptosporioptides biosynthesis, monodictylactone is reduced at C-12 to an alcohol (by the short chain dehydrogenases dmxR12 or dmxR8) and hydroxylated at C-5 by dmxR9, yielding the electron-rich aromatic which could eliminate H(2)O to form the ortho-quinonemethide, followed by tautomerisation to paraquinone and complete the formal reduction to produce the 10-methylgroup. Conjugate addition of C-4a-OH to the resulting paraquinone by the monooxygenase dmxR10 then gives cyclohexadienone, which is then reduced at C-5 by the short chain dehydrogenase dmxR3 to give the dihydroxanthone. The 6,7-epoxide in the cryptosporioptides could be introduced by the cytochrome P450 monooxygenase dmxL3. The highly reducing PKS dmxL2 manufactures butyrate, which is further carboxylated by dmxL1 to form ethylmalonate. It is not yet clear whether the carboxylation occurs while the butyrate is attached to the ACP of dmxL2, but this unusual fungal metabolite could then be esterified to O-5 by the O-acetyltransferase dmxR13. Finally, dimerization performed by dmxR5 gives the observed dimers cryptosporioptides A, B and C as the final products of the pathway. The polypeptide is Short chain dehydrogenase/reductase dmxR18 (Cryptosporiopsis sp. (strain 8999)).